We begin with the raw amino-acid sequence, 342 residues long: Uroporphyrinogen decarboxylase (342 aa).

Substrate-binding positions include 22–26 (RQAGR), phenylalanine 41, aspartate 72, tyrosine 146, serine 201, and histidine 317.

The protein belongs to the uroporphyrinogen decarboxylase family. As to quaternary structure, homodimer.

The protein resides in the cytoplasm. The catalysed reaction is uroporphyrinogen III + 4 H(+) = coproporphyrinogen III + 4 CO2. The protein operates within porphyrin-containing compound metabolism; protoporphyrin-IX biosynthesis; coproporphyrinogen-III from 5-aminolevulinate: step 4/4. Catalyzes the decarboxylation of four acetate groups of uroporphyrinogen-III to yield coproporphyrinogen-III. The chain is Uroporphyrinogen decarboxylase from Orientia tsutsugamushi (strain Boryong) (Rickettsia tsutsugamushi).